Reading from the N-terminus, the 205-residue chain is NADH-quinone oxidoreductase subunit I (205 aa).

4Fe-4S ferredoxin-type domains follow at residues 75 to 104 (RLLE…METS) and 114 to 143 (HEYT…HGGR). [4Fe-4S] cluster is bound by residues Cys84, Cys87, Cys90, Cys94, Cys123, Cys126, Cys129, and Cys133.

Belongs to the complex I 23 kDa subunit family. NDH-1 is composed of 14 different subunits. Subunits NuoA, H, J, K, L, M, N constitute the membrane sector of the complex. Requires [4Fe-4S] cluster as cofactor.

Its subcellular location is the cell inner membrane. It catalyses the reaction a quinone + NADH + 5 H(+)(in) = a quinol + NAD(+) + 4 H(+)(out). Its function is as follows. NDH-1 shuttles electrons from NADH, via FMN and iron-sulfur (Fe-S) centers, to quinones in the respiratory chain. The immediate electron acceptor for the enzyme in this species is believed to be ubiquinone. Couples the redox reaction to proton translocation (for every two electrons transferred, four hydrogen ions are translocated across the cytoplasmic membrane), and thus conserves the redox energy in a proton gradient. The protein is NADH-quinone oxidoreductase subunit I of Wolinella succinogenes (strain ATCC 29543 / DSM 1740 / CCUG 13145 / JCM 31913 / LMG 7466 / NCTC 11488 / FDC 602W) (Vibrio succinogenes).